The following is a 68-amino-acid chain: MMNWDRIEGKWKQLKGQAQQQWGDLTDDDLDRVDGKREELVGVVQERYGLAKDEAEKQVQQFESSCNC.

It belongs to the UPF0337 (CsbD) family.

The protein is UPF0337 protein RB10934 of Rhodopirellula baltica (strain DSM 10527 / NCIMB 13988 / SH1).